The following is an 89-amino-acid chain: Long neurotoxin homolog TA-bm16 (89 aa).

The N-terminal stretch at 1–21 (MKTLLLTLVVVTIVCLDLGYT) is a signal peptide. Cystine bridges form between C24-C45, C27-C32, C38-C66, C70-C81, and C82-C87.

Belongs to the three-finger toxin family. Ancestral subfamily. Orphan group V sub-subfamily. In terms of tissue distribution, expressed by the venom gland.

The protein localises to the secreted. Functionally, exhibits M2 muscarinic acetylcholine receptor (CHRM2)-blocking activity, but has a weak binding activity toward nicotinic AChR. Moreover, it inhibits collagen-induced platelet aggregation. In Bungarus multicinctus (Many-banded krait), this protein is Long neurotoxin homolog TA-bm16.